A 251-amino-acid chain; its full sequence is Aliphatic sulfonates import ATP-binding protein SsuB (251 aa).

One can recognise an ABC transporter domain in the interval 3–231 (VSIDGVSKYF…PRSKTSESFQ (229 aa)). 39-46 (GPSGCGKS) provides a ligand contact to ATP.

It belongs to the ABC transporter superfamily. Aliphatic sulfonates importer (TC 3.A.1.17.2) family. As to quaternary structure, the complex is composed of two ATP-binding proteins (SsuB), two transmembrane proteins (SsuC) and a solute-binding protein (SsuA).

It is found in the cell membrane. It carries out the reaction ATP + H2O + aliphatic sulfonate-[sulfonate-binding protein]Side 1 = ADP + phosphate + aliphatic sulfonateSide 2 + [sulfonate-binding protein]Side 1.. Its function is as follows. Part of the ABC transporter complex SsuABC involved in aliphatic sulfonates import. Responsible for energy coupling to the transport system. The polypeptide is Aliphatic sulfonates import ATP-binding protein SsuB (Bacillus cereus (strain ATCC 10987 / NRS 248)).